The chain runs to 67 residues: Protein C' (67 aa).

This sequence belongs to the rhabdoviruses C protein family.

In terms of biological role, seems to stimulates transcription by the viral polymerase. May play a role in viral pathogenesis or transmission by insects vectors. This chain is Protein C' (P), found in Vesicular stomatitis Indiana virus (strain San Juan) (VSIV).